A 237-amino-acid chain; its full sequence is uncharacterized protein (237 aa).

Residue 21–28 (GCDGSGKS) coordinates ATP.

The protein to E.coli YghR and YghT.

This is an uncharacterized protein from Escherichia coli (strain K12).